A 733-amino-acid chain; its full sequence is MTEGTCLRRRGGPYKTEPATDLTRWRLQNELGRQRWTYYQAEDDPGREQTGLEAHSLGLDTRSYFTDLPKAQTAHEGALNGVTFYAKLQAEDGHWAGDYGGPLFLLPGLLITCHISHISLPAGYREEMVRYLRSVQLPDGGWGLHIEDKSTVFGTALNYVALRILGIGPDDPDLVRARNVLHKKGGAVAIPSWGKFWLAVLNVYSWEGLNTLFPEMWLFPEWVPAHPSTLWCHCRQVYLPMSYCYATRLSASEDPLVQSLRQELYVQDYASIDWPAQRNNVSPDEMYTPHSWLLHVVYGLLNLYERFHSTSLRKWAVQMLYEHIAADDCFTKCISIGPISKTINMLVRWSVDGPSSPAFQEHVSRIKDYLWLGLDGMKMQGTNGSQIWDTSFAIQALLEAGAHHRPEFLPCLQKAHEFLRLSQVPENCPDYQKYYRHMRKGGFSFSTLDCGWIVADCTAEGLKAVLLLQNQCPSITEHIPRERLCDAVDVLLSLRNADGGFATYEKKRGGYLLELLNPSEVFGDIMIDYTYVECTSAVMQALKHFHEHFPDYRAAEVRETLNQGLDFCRRKQRADGSWEGSWGVCFTYGTWFGLEAFACMGHTYQDGAACAEVAQACNFLLSQQMADGGWGEDFESCEQRRYVQSARSQVHSTCWALMGLMAVRHPDITAQERGIRCLLGKQLPNGDWPQENISGVFNKSCAISYTSYRNIFPIWALGRFSNLYPDNTLAGHI.

The residue at position 2 (threonine 2) is an N-acetylthreonine. Residues 125–166 (REEMVRYLRSVQLPDGGWGLHIEDKSTVFGTALNYVALRILG) form a PFTB 1 repeat. Aspartate 456 functions as the Proton donor in the catalytic mechanism. PFTB repeat units follow at residues 484-529 (LCDA…MIDY), 561-601 (LNQG…ACMG), and 613-654 (VAQA…HSTC).

Belongs to the terpene cyclase/mutase family. Monomer.

The protein localises to the endoplasmic reticulum membrane. It carries out the reaction (S)-2,3-epoxysqualene = lanosterol. Its pathway is terpene metabolism; lanosterol biosynthesis; lanosterol from farnesyl diphosphate: step 3/3. Key enzyme in the cholesterol biosynthesis pathway. Catalyzes the cyclization of (S)-2,3 oxidosqualene to lanosterol, a reaction that forms the sterol nucleus. Through the production of lanosterol may regulate lens protein aggregation and increase transparency. The sequence is that of Lanosterol synthase from Mus musculus (Mouse).